The chain runs to 226 residues: Enolase-phosphatase E1 (226 aa).

It belongs to the HAD-like hydrolase superfamily. MasA/MtnC family. In terms of assembly, monomer. Requires Mg(2+) as cofactor.

It catalyses the reaction 5-methylsulfanyl-2,3-dioxopentyl phosphate + H2O = 1,2-dihydroxy-5-(methylsulfanyl)pent-1-en-3-one + phosphate. It participates in amino-acid biosynthesis; L-methionine biosynthesis via salvage pathway; L-methionine from S-methyl-5-thio-alpha-D-ribose 1-phosphate: step 3/6. Its pathway is amino-acid biosynthesis; L-methionine biosynthesis via salvage pathway; L-methionine from S-methyl-5-thio-alpha-D-ribose 1-phosphate: step 4/6. In terms of biological role, bifunctional enzyme that catalyzes the enolization of 2,3-diketo-5-methylthiopentyl-1-phosphate (DK-MTP-1-P) into the intermediate 2-hydroxy-3-keto-5-methylthiopentenyl-1-phosphate (HK-MTPenyl-1-P), which is then dephosphorylated to form the acireductone 1,2-dihydroxy-3-keto-5-methylthiopentene (DHK-MTPene). This Shewanella oneidensis (strain ATCC 700550 / JCM 31522 / CIP 106686 / LMG 19005 / NCIMB 14063 / MR-1) protein is Enolase-phosphatase E1.